The sequence spans 412 residues: Serine hydroxymethyltransferase (412 aa).

(6S)-5,6,7,8-tetrahydrofolate contacts are provided by residues L117 and 121–123; that span reads GHL. Position 226 is an N6-(pyridoxal phosphate)lysine (K226).

This sequence belongs to the SHMT family. Homodimer. The cofactor is pyridoxal 5'-phosphate.

The protein resides in the cytoplasm. It catalyses the reaction (6R)-5,10-methylene-5,6,7,8-tetrahydrofolate + glycine + H2O = (6S)-5,6,7,8-tetrahydrofolate + L-serine. It participates in one-carbon metabolism; tetrahydrofolate interconversion. Its pathway is amino-acid biosynthesis; glycine biosynthesis; glycine from L-serine: step 1/1. Catalyzes the reversible interconversion of serine and glycine with tetrahydrofolate (THF) serving as the one-carbon carrier. This reaction serves as the major source of one-carbon groups required for the biosynthesis of purines, thymidylate, methionine, and other important biomolecules. Also exhibits THF-independent aldolase activity toward beta-hydroxyamino acids, producing glycine and aldehydes, via a retro-aldol mechanism. This chain is Serine hydroxymethyltransferase, found in Staphylococcus aureus (strain MW2).